A 272-amino-acid chain; its full sequence is MLELEESSKIIEKIKYNKPLIHHITNYVSVNDCANIVLALGGSPIMADDPKEVVEVVSKASALVINIGTLNDKRVQSMLLAGRKANELGIPVILDPVGVGASTFRKDTVNQLLKNIDFTVIRGNASEMQVLMNMNYSVAGVDSMDFGGNTPKMIRTLAQKYKTTVAITGATDSICDGTTLISVSNGHSLLSQVTGTGCMTTSLIATCLAVTDQALLAALAGVLIMDLAGEGAYASLKAHESIGTFKVRIFDHIHQLTEQTILEGGSLDVSYR.

Met-46 is a binding site for substrate. Positions 122 and 168 each coordinate ATP. Substrate is bound at residue Gly-195.

The protein belongs to the Thz kinase family. The cofactor is Mg(2+).

It carries out the reaction 5-(2-hydroxyethyl)-4-methylthiazole + ATP = 4-methyl-5-(2-phosphooxyethyl)-thiazole + ADP + H(+). It participates in cofactor biosynthesis; thiamine diphosphate biosynthesis; 4-methyl-5-(2-phosphoethyl)-thiazole from 5-(2-hydroxyethyl)-4-methylthiazole: step 1/1. Its function is as follows. Catalyzes the phosphorylation of the hydroxyl group of 4-methyl-5-beta-hydroxyethylthiazole (THZ). This is Hydroxyethylthiazole kinase from Alkaliphilus metalliredigens (strain QYMF).